A 704-amino-acid chain; its full sequence is Protein kinase C-like 1 (704 aa).

2 positions are modified to phosphothreonine; by autocatalysis: threonine 89 and threonine 139. 2 consecutive Phorbol-ester/DAG-type zinc fingers follow at residues 165–215 and 237–287; these read GHQF…IMQC and PHRF…SNLC. At threonine 324 the chain carries Phosphothreonine; by autocatalysis. Residues 375–634 form the Protein kinase domain; sequence FNLLKVLGKG…DGPIRQHCFF (260 aa). ATP-binding positions include 381-389 and lysine 404; that span reads LGKGSFGKV. The Proton acceptor role is filled by aspartate 499. The AGC-kinase C-terminal domain occupies 635 to 704; sequence RGVDWKRFEN…FSYTNPHFSK (70 aa).

This sequence belongs to the protein kinase superfamily. AGC Ser/Thr protein kinase family. PKC subfamily.

The enzyme catalyses L-seryl-[protein] + ATP = O-phospho-L-seryl-[protein] + ADP + H(+). It catalyses the reaction L-threonyl-[protein] + ATP = O-phospho-L-threonyl-[protein] + ADP + H(+). Functionally, diacylglycerol (DAG)-dependent serine/threonine-protein kinase that phosphorylates a range of cellular proteins. Phosphorylates mlk-1, a component of the JNK pathway. Involved in axon regeneration after injury probably by activating the JNK pathway. Plays a role in resistance to fungal infection and in wound healing by promoting expression of antimicrobial peptide nlp-29 in the epidermis downstream of gpa-12 and plc-3 and upstream of tir-1-p38-like pathway. Probably by regulating neuronal transmission in ALA neurons, regulates the decrease in pharyngeal pumping during the quiescent state that precedes each larval molt, downstream of lin-3 and receptor let-23 and phospholipase plc-3. The polypeptide is Protein kinase C-like 1 (tpa-1) (Caenorhabditis elegans).